A 309-amino-acid polypeptide reads, in one-letter code: Succinate dehydrogenase [ubiquinone] iron-sulfur subunit 3, mitochondrial (309 aa).

The transit peptide at 1–22 directs the protein to the mitochondrion; that stretch reads MSSVLRLLGRRICNPAAEKVRL. The 2Fe-2S ferredoxin-type domain occupies 69–160; sequence FKIYRWNPDK…PTIITPLPHM (92 aa). Positions 120, 125, and 140 each coordinate [2Fe-2S] cluster. Residues 202-232 form the 4Fe-4S ferredoxin-type domain; it reads DRKKLDGLYECILCACCTTSCPSYWWNPEEF. Residues Cys212, Cys215, and Cys218 each coordinate [4Fe-4S] cluster. Cys222 is a [3Fe-4S] cluster binding site. Residue Trp227 coordinates a ubiquinone. Cys270 and Cys276 together coordinate [3Fe-4S] cluster. Cys280 provides a ligand contact to [4Fe-4S] cluster.

The protein belongs to the succinate dehydrogenase/fumarate reductase iron-sulfur protein family. In terms of assembly, component of complex II composed of eight subunits in plants: four classical SDH subunits SDH1, SDH2, SDH3 and SDH4 (a flavoprotein (FP), an iron-sulfur protein (IP), and a cytochrome b composed of a large and a small subunit.), as well as four subunits unknown in mitochondria from bacteria and heterotrophic eukaryotes. [2Fe-2S] cluster serves as cofactor. [3Fe-4S] cluster is required as a cofactor. Requires [4Fe-4S] cluster as cofactor.

The protein resides in the mitochondrion inner membrane. The enzyme catalyses a quinone + succinate = fumarate + a quinol. It functions in the pathway carbohydrate metabolism; tricarboxylic acid cycle; fumarate from succinate (eukaryal route): step 1/1. In terms of biological role, iron-sulfur protein (IP) subunit of succinate dehydrogenase (SDH) that is involved in complex II of the mitochondrial electron transport chain and is responsible for transferring electrons from succinate to ubiquinone (coenzyme Q). The polypeptide is Succinate dehydrogenase [ubiquinone] iron-sulfur subunit 3, mitochondrial (SDH2-3) (Arabidopsis thaliana (Mouse-ear cress)).